We begin with the raw amino-acid sequence, 153 residues long: Putative OPA3-like protein CG43998 (153 aa).

Residues 101–153 adopt a coiled-coil conformation; sequence ELSKTYTKTKKQNQEIEDQKRVLDECVDCISADVERNQREINWIKAALKNVEK.

It belongs to the OPA3 family.

The protein is Putative OPA3-like protein CG43998 of Drosophila melanogaster (Fruit fly).